Here is a 372-residue protein sequence, read N- to C-terminus: Phenylalanine--tRNA ligase alpha subunit (372 aa).

Residue E276 participates in Mg(2+) binding.

This sequence belongs to the class-II aminoacyl-tRNA synthetase family. Phe-tRNA synthetase alpha subunit type 1 subfamily. As to quaternary structure, tetramer of two alpha and two beta subunits. Requires Mg(2+) as cofactor.

The protein resides in the cytoplasm. It carries out the reaction tRNA(Phe) + L-phenylalanine + ATP = L-phenylalanyl-tRNA(Phe) + AMP + diphosphate + H(+). This chain is Phenylalanine--tRNA ligase alpha subunit, found in Thermobifida fusca (strain YX).